Consider the following 68-residue polypeptide: Peptide Smp13 (68 aa).

The N-terminal stretch at 1 to 23 (MKTQFAIFLITLVLFQMFSQSDA) is a signal peptide. Phe36 is modified (phenylalanine amide). Positions 37 to 68 (GKRGLGDHDDLDELFDGEISQADIDFLKEIMQ) are excised as a propeptide.

This sequence belongs to the non-disulfide-bridged peptide (NDBP) superfamily. Short antimicrobial peptide (group 4) family. In terms of tissue distribution, expressed by the venom gland.

The protein localises to the secreted. Its function is as follows. Peptide with unknown function. Does not show antimicrobial activity against the Gram-positive, and Gram-negative bacteria tested, as well as against the fungus C.albicans. The sequence is that of Peptide Smp13 from Scorpio palmatus (Israeli golden scorpion).